A 210-amino-acid polypeptide reads, in one-letter code: Large ribosomal subunit protein uL4 (210 aa).

Over residues 44–54 (KRQGTASTLTR) the composition is skewed to polar residues. Positions 44–85 (KRQGTASTLTRSEVRGGGRKPYKQKGTGRARQGSIRTPLRPG) are disordered. Over residues 60–71 (GGRKPYKQKGTG) the composition is skewed to basic residues.

This sequence belongs to the universal ribosomal protein uL4 family. As to quaternary structure, part of the 50S ribosomal subunit.

Its function is as follows. One of the primary rRNA binding proteins, this protein initially binds near the 5'-end of the 23S rRNA. It is important during the early stages of 50S assembly. It makes multiple contacts with different domains of the 23S rRNA in the assembled 50S subunit and ribosome. Forms part of the polypeptide exit tunnel. The polypeptide is Large ribosomal subunit protein uL4 (Prochlorococcus marinus (strain MIT 9301)).